We begin with the raw amino-acid sequence, 436 residues long: 3-ketoacyl-CoA thiolase (436 aa).

Cys-99 acts as the Acyl-thioester intermediate in catalysis. Catalysis depends on proton acceptor residues His-392 and Cys-422.

Belongs to the thiolase-like superfamily. Thiolase family. In terms of assembly, heterotetramer of two alpha chains (FadJ) and two beta chains (FadI).

It is found in the cytoplasm. The catalysed reaction is an acyl-CoA + acetyl-CoA = a 3-oxoacyl-CoA + CoA. It functions in the pathway lipid metabolism; fatty acid beta-oxidation. Catalyzes the final step of fatty acid oxidation in which acetyl-CoA is released and the CoA ester of a fatty acid two carbons shorter is formed. This chain is 3-ketoacyl-CoA thiolase, found in Escherichia coli (strain K12 / MC4100 / BW2952).